The primary structure comprises 334 residues: Ferredoxin--NADP reductase (334 aa).

FAD is bound by residues Asp-32, Gln-40, Tyr-45, Val-85, Phe-120, Asp-287, and Thr-327.

It belongs to the ferredoxin--NADP reductase type 2 family. Homodimer. FAD serves as cofactor.

It carries out the reaction 2 reduced [2Fe-2S]-[ferredoxin] + NADP(+) + H(+) = 2 oxidized [2Fe-2S]-[ferredoxin] + NADPH. The sequence is that of Ferredoxin--NADP reductase from Wolbachia pipientis subsp. Culex pipiens (strain wPip).